The primary structure comprises 267 residues: ATP synthase subunit a (267 aa).

5 consecutive transmembrane segments (helical) span residues 38–58, 98–118, 145–165, 208–228, and 238–258; these read WHIDSLLFSVGLGVLFLFVFY, IAPLALTIFVWILLMNTMDLI, NITFGLSLSVFALIVFYSIKI, LFGNLYAGELIFILIALMPWW, and AIFHILVIVLQAFIFMMLTIV.

The protein belongs to the ATPase A chain family. F-type ATPases have 2 components, CF(1) - the catalytic core - and CF(0) - the membrane proton channel. CF(1) has five subunits: alpha(3), beta(3), gamma(1), delta(1), epsilon(1). CF(0) has three main subunits: a(1), b(2) and c(9-12). The alpha and beta chains form an alternating ring which encloses part of the gamma chain. CF(1) is attached to CF(0) by a central stalk formed by the gamma and epsilon chains, while a peripheral stalk is formed by the delta and b chains.

The protein resides in the cell inner membrane. Key component of the proton channel; it plays a direct role in the translocation of protons across the membrane. This Psychromonas ingrahamii (strain DSM 17664 / CCUG 51855 / 37) protein is ATP synthase subunit a.